The primary structure comprises 90 residues: Mitochondrial import inner membrane translocase subunit TIM8 (90 aa).

A Twin CX3C motif motif is present at residues 44–70; the sequence is CFKKCNANKPITSGTLDSSEEQCLTNC. Cystine bridges form between Cys-44/Cys-70 and Cys-48/Cys-66.

This sequence belongs to the small Tim family. Heterohexamer; composed of 3 copies of TIM8 and 3 copies of TIM13, named soluble 70 kDa complex. Associates with the TIM22 complex, whose core is composed of TIM22 and TIM54. Interacts with the transmembrane regions of multi-pass transmembrane proteins in transit.

It localises to the mitochondrion inner membrane. In terms of biological role, mitochondrial intermembrane chaperone that participates in the import and insertion of some multi-pass transmembrane proteins into the mitochondrial inner membrane. Also required for the transfer of beta-barrel precursors from the TOM complex to the sorting and assembly machinery (SAM complex) of the outer membrane. Acts as a chaperone-like protein that protects the hydrophobic precursors from aggregation and guide them through the mitochondrial intermembrane space. The TIM8-TIM13 complex is non essential and only mediates the import of few proteins, while the predominant TIM9-TIM10 70 kDa complex is crucial and mediates the import of much more proteins. This chain is Mitochondrial import inner membrane translocase subunit TIM8 (TIM8), found in Debaryomyces hansenii (strain ATCC 36239 / CBS 767 / BCRC 21394 / JCM 1990 / NBRC 0083 / IGC 2968) (Yeast).